Here is a 168-residue protein sequence, read N- to C-terminus: Group 2 truncated hemoglobin 3-1 (168 aa).

H98 serves as a coordination point for heme b.

Belongs to the truncated hemoglobin family. Group II subfamily. Homodimer when ferric. Mainly expressed in root nodules, but barely in leaves, roots, stems, flowers and fruits.

In terms of biological role, hemoglobin-like protein that exhibits an unusual concentration-independent binding of O(2) and CO. Required for general plant development and during nodulation. May promote shoot organogenesis from root explants. In Lotus japonicus (Lotus corniculatus var. japonicus), this protein is Group 2 truncated hemoglobin 3-1.